Consider the following 410-residue polypeptide: Sensor-like histidine kinase SenX3 (410 aa).

The next 2 membrane-spanning stretches (helical) occupy residues 6-26 (ALLL…AVGM) and 46-66 (ITVS…AAVV). The Histidine kinase domain occupies 164–380 (NVSHELKTPV…TFTLALPALI (217 aa)). His167 carries the post-translational modification Phosphohistidine; by autocatalysis. The tract at residues 385–410 (DDERPEQAREPELRSNRSQREEELSR) is disordered.

In terms of processing, autophosphorylated.

It localises to the cell membrane. The catalysed reaction is ATP + protein L-histidine = ADP + protein N-phospho-L-histidine.. Member of the two-component regulatory system SenX3/RegX3. Autophosphorylates, and then transfers the phosphate group to RegX3. This is Sensor-like histidine kinase SenX3 from Mycobacterium bovis (strain ATCC BAA-935 / AF2122/97).